The following is a 184-amino-acid chain: Ribosome-recycling factor (184 aa).

The protein belongs to the RRF family.

The protein localises to the cytoplasm. Responsible for the release of ribosomes from messenger RNA at the termination of protein biosynthesis. May increase the efficiency of translation by recycling ribosomes from one round of translation to another. This Onion yellows phytoplasma (strain OY-M) protein is Ribosome-recycling factor.